Consider the following 393-residue polypeptide: Sugar efflux transporter B (393 aa).

12 helical membrane-spanning segments follow: residues 13–33, 52–72, 84–101, 105–124, 152–172, 174–194, 219–239, 253–273, 283–303, 308–328, 344–364, and 366–386; these read FDLT…AGAL, MVGF…QFLA, LIVF…LFAW, YFIL…TANP, VSLA…GFSF, VMYL…WFFL, LLLF…IINM, LAGV…LIAG, LLMC…LLAH, LLGL…IGML, LYTN…GIAA, and IWNY…TMFC.

This sequence belongs to the major facilitator superfamily. Set transporter family.

Its subcellular location is the cell inner membrane. Functionally, involved in the efflux of sugars. The physiological role may be the detoxification of non-metabolizable sugar analogs. Can transport lactose and glucose. The protein is Sugar efflux transporter B (setB) of Salmonella typhimurium (strain LT2 / SGSC1412 / ATCC 700720).